Consider the following 513-residue polypeptide: GMP synthase [glutamine-hydrolyzing] (513 aa).

Residues 5–195 (LVLVIDFGGQ…VYNICGCTGD (191 aa)) form the Glutamine amidotransferase type-1 domain. The Nucleophile role is filled by cysteine 82. Active-site residues include histidine 169 and glutamate 171. A GMPS ATP-PPase domain is found at 196–388 (WKMDSFVEKT…LGIPEKLVFR (193 aa)). 223-229 (SGGVDSS) contacts ATP.

As to quaternary structure, homodimer.

It catalyses the reaction XMP + L-glutamine + ATP + H2O = GMP + L-glutamate + AMP + diphosphate + 2 H(+). The protein operates within purine metabolism; GMP biosynthesis; GMP from XMP (L-Gln route): step 1/1. Its function is as follows. Catalyzes the synthesis of GMP from XMP. The protein is GMP synthase [glutamine-hydrolyzing] of Clostridium botulinum (strain Eklund 17B / Type B).